A 573-amino-acid polypeptide reads, in one-letter code: ATP-dependent RNA helicase RhlB (573 aa).

Residues 9–37 carry the Q motif motif; it reads LTFSSFDLHPALVAGLESAGFTRCTPIQA. The Helicase ATP-binding domain maps to 40-220; the sequence is LPVALPGGDV…YEHMNEPEKL (181 aa). 53–60 provides a ligand contact to ATP; sequence AQTGTGKT. Positions 166–169 match the DEAD box motif; the sequence is DEAD. Positions 231-393 constitute a Helicase C-terminal domain; that stretch reads RVRQRIYFPS…PVTTELLTPL (163 aa). Over residues 391 to 400 the composition is skewed to low complexity; it reads TPLPRTPRAT. The disordered stretch occupies residues 391–559; that stretch reads TPLPRTPRAT…AKPSGSPSLL (169 aa). Acidic residues predominate over residues 402-411; the sequence is EGEEVDDDAG. Over residues 419-432 the composition is skewed to basic and acidic residues; the sequence is REAREQRAADEARR. The span at 435-449 shows a compositional bias: gly residues; it reads GRSGPGGASRSGSGG. Basic and acidic residues predominate over residues 450 to 461; sequence GRRDGAGADGKP. Over residues 476–499 the composition is skewed to low complexity; it reads PAAAPSETPVVVAAAAETPAVTAA. Residues 505–514 show a composition bias toward basic residues; that stretch reads PRKRRRRRNG. 2 stretches are compositionally biased toward low complexity: residues 516–528 and 541–559; these read PVEG…ASTP and VVAK…PSLL.

This sequence belongs to the DEAD box helicase family. RhlB subfamily. In terms of assembly, component of the RNA degradosome, which is a multiprotein complex involved in RNA processing and mRNA degradation.

It is found in the cytoplasm. The catalysed reaction is ATP + H2O = ADP + phosphate + H(+). DEAD-box RNA helicase involved in RNA degradation. Has RNA-dependent ATPase activity and unwinds double-stranded RNA. The polypeptide is ATP-dependent RNA helicase RhlB (Xanthomonas campestris pv. campestris (strain B100)).